A 339-amino-acid polypeptide reads, in one-letter code: Ribosomal RNA large subunit methyltransferase M (339 aa).

S-adenosyl-L-methionine-binding positions include S176, 206 to 209 (APGG), D225, D245, and D261. K290 acts as the Proton acceptor in catalysis.

This sequence belongs to the class I-like SAM-binding methyltransferase superfamily. RNA methyltransferase RlmE family. RlmM subfamily. As to quaternary structure, monomer.

The protein localises to the cytoplasm. The catalysed reaction is cytidine(2498) in 23S rRNA + S-adenosyl-L-methionine = 2'-O-methylcytidine(2498) in 23S rRNA + S-adenosyl-L-homocysteine + H(+). Catalyzes the 2'-O-methylation at nucleotide C2498 in 23S rRNA. This Halorhodospira halophila (strain DSM 244 / SL1) (Ectothiorhodospira halophila (strain DSM 244 / SL1)) protein is Ribosomal RNA large subunit methyltransferase M.